The following is a 201-amino-acid chain: Large ribosomal subunit protein uL4 (201 aa).

The segment at 45-75 (AQKSRSEVSGSGKKPWRQKGTGRARSGSLRS) is disordered.

Belongs to the universal ribosomal protein uL4 family. Part of the 50S ribosomal subunit.

Functionally, one of the primary rRNA binding proteins, this protein initially binds near the 5'-end of the 23S rRNA. It is important during the early stages of 50S assembly. It makes multiple contacts with different domains of the 23S rRNA in the assembled 50S subunit and ribosome. Forms part of the polypeptide exit tunnel. The sequence is that of Large ribosomal subunit protein uL4 from Buchnera aphidicola subsp. Cinara cedri (strain Cc).